Here is a 129-residue protein sequence, read N- to C-terminus: Small ribosomal subunit protein uS11 (129 aa).

It belongs to the universal ribosomal protein uS11 family. As to quaternary structure, part of the 30S ribosomal subunit. Interacts with proteins S7 and S18. Binds to IF-3.

Functionally, located on the platform of the 30S subunit, it bridges several disparate RNA helices of the 16S rRNA. Forms part of the Shine-Dalgarno cleft in the 70S ribosome. This is Small ribosomal subunit protein uS11 from Agrobacterium fabrum (strain C58 / ATCC 33970) (Agrobacterium tumefaciens (strain C58)).